A 411-amino-acid chain; its full sequence is Intracellular hyaluronan-binding protein 4 (411 aa).

2 positions are modified to phosphoserine: S7 and S36. The stretch at 42 to 62 forms a coiled coil; it reads LREAEHRRQQQLQRKRRDEAA. Residues 42–271 are disordered; sequence LREAEHRRQQ…ECQGTLDEES (230 aa). R70 bears the Omega-N-methylarginine mark. S74 carries the post-translational modification Phosphoserine. Residues 87–97 are compositionally biased toward basic and acidic residues; it reads GRRESQKERKS. Residue S108 is modified to Phosphoserine. Composition is skewed to basic and acidic residues over residues 138 to 181 and 205 to 229; these read VLER…DRPL and DSFD…RMED. Residues K212 and K274 each participate in a glycyl lysine isopeptide (Lys-Gly) (interchain with G-Cter in SUMO1); alternate cross-link. Residues K212 and K274 each participate in a glycyl lysine isopeptide (Lys-Gly) (interchain with G-Cter in SUMO2); alternate cross-link. Residues 279–301 are a coiled coil; the sequence is EVEEENQVQEMTLDEWKNLQEQT. Positions 296-313 are enriched in basic and acidic residues; sequence NLQEQTRPKPEFNIRKPE. A disordered region spans residues 296–318; the sequence is NLQEQTRPKPEFNIRKPESTVPS. Residue K334 forms a Glycyl lysine isopeptide (Lys-Gly) (interchain with G-Cter in SUMO1); alternate linkage. A Glycyl lysine isopeptide (Lys-Gly) (interchain with G-Cter in SUMO2); alternate cross-link involves residue K334. Phosphothreonine; by PKC occurs at positions 352 and 373. Residues 358–411 are disordered; sequence NFGNLPRPGRGARGSTRGGRGRMRRTENYGPRAEVVTQDVAPNPDDPEDFPALA. Over residues 402-411 the composition is skewed to acidic residues; sequence DDPEDFPALA.

Belongs to the SERBP1-HABP4 family. In terms of assembly, associates with ribosomes; promoting ribosome stabilization. Interacts with EEF2/eEF2; promoting ribosome stabilization. Interacts with FMR1. Interacts with FXR1 and FXR2. Interacts with CHD3 (via C-terminus). Interacts (via C-terminus) with RACK1. Interacts with p53/TP53. Interacts (via N-terminus) with SRSF9; this interaction is direct. Interacts with SYNCRIP; this interaction is direct. Interacts with MEF2C (via N-terminus); this interaction decreases DNA-binding activity of MEF2C in myocardial cells in response to mechanical stress. Interacts with PRMT1 (via N-terminus). Interacts with SPIN1. Post-translationally, phosphorylated by phorbol 12-myristate 13-acetate (PMA)-activated PKC isoforms at Thr-352 and Thr-373. Methylated. Methylation is decreased by phorbol 12-myristate 13-acetate (PMA)-activated PKC, in vitro. Expressed in adult heart, brain, liver, kidney, testis, and in various embryonic tissues, but not in adult spleen, lung or skeletal muscle.

It is found in the nucleus. The protein resides in the cytoplasm. It localises to the stress granule. Its subcellular location is the sarcoplasm. The protein localises to the nuclear body. It is found in the nucleolus. The protein resides in the nucleus speckle. It localises to the cajal body. Its subcellular location is the gem. In terms of biological role, ribosome-binding protein that promotes ribosome hibernation, a process during which ribosomes are stabilized in an inactive state and preserved from proteasomal degradation. Acts via its association with EEF2/eEF2 factor at the A-site of the ribosome, promoting ribosome stabilization in an inactive state compatible with storage. Plays a key role in ribosome hibernation in the mature oocyte by promoting ribosome stabilization. Ribosomes, which are produced in large quantities during oogenesis, are stored and translationally repressed in the oocyte and early embryo. Also binds RNA, regulating transcription and pre-mRNA splicing. Binds (via C-terminus) to poly(U) RNA. Seems to play a role in PML-nuclear bodies formation. Negatively regulates DNA-binding activity of the transcription factor MEF2C in myocardial cells in response to mechanical stress. The sequence is that of Intracellular hyaluronan-binding protein 4 from Mus musculus (Mouse).